The chain runs to 85 residues: Large ribosomal subunit protein bL27 (85 aa).

Belongs to the bacterial ribosomal protein bL27 family.

This is Large ribosomal subunit protein bL27 from Mycobacteroides abscessus (strain ATCC 19977 / DSM 44196 / CCUG 20993 / CIP 104536 / JCM 13569 / NCTC 13031 / TMC 1543 / L948) (Mycobacterium abscessus).